The following is a 393-amino-acid chain: MTIRNQRLSLLKQPISSILNQHLIDYPTPSNLSYWWGFGSLAGICLVIQIVTGVFLAMHYTPHVDLAFNSVEHIMRDVEGGWLLRYMHANGASMFFIVVYLHIFRGLYYASYSSPREFVWCLGVVIFLLMIVTAFIGYVLPWGQMSFWGATVITSLASAIPVVGDTIVTWLWGGFSVDNATLNRFFSLHYLLPFILVGASLLHLAALHQYGSNNPLGVHSEMDKIAFYPYFYVKDLVGWVAFAIFFSIWIFYAPNVLGHPDNYIPANPMSTPPHIVPEWYFLPIYAILRSIPDKVGGVAAIALVFICLLALPFFKSMYVRSSSFRPIYQGIFWLLLADCLLLGWIGCQPVEAPFVTIGQISSLVFFLFFAITPILGRVGRGIPNSYTDETDHT.

The next 4 helical transmembrane spans lie at 38–58, 82–104, 119–139, and 185–205; these read FGSL…FLAM, WLLR…LHIF, VWCL…IGYV, and FFSL…LHLA. Heme b-binding residues include His-88 and His-102. His-189 and His-203 together coordinate heme b. His-208 contributes to the a ubiquinone binding site. Helical transmembrane passes span 231-251, 295-315, 327-347, and 354-373; these read FYVK…IWIF, VGGV…PFFK, IYQG…WIGC, and FVTI…AITP.

It belongs to the cytochrome b family. As to quaternary structure, the main subunits of complex b-c1 are: cytochrome b, cytochrome c1 and the Rieske protein. Requires heme b as cofactor. In terms of processing, first mitochondrial-encoded protein to be shown to have its N-terminal methionine cleaved off.

Its subcellular location is the mitochondrion inner membrane. Functionally, component of the ubiquinol-cytochrome c reductase complex (complex III or cytochrome b-c1 complex) that is part of the mitochondrial respiratory chain. The b-c1 complex mediates electron transfer from ubiquinol to cytochrome c. Contributes to the generation of a proton gradient across the mitochondrial membrane that is then used for ATP synthesis. The polypeptide is Cytochrome b (MT-CYB) (Solanum tuberosum (Potato)).